Here is a 365-residue protein sequence, read N- to C-terminus: Chorismate synthase (365 aa).

Arg-46 is an NADP(+) binding site. Residues 123 to 125, 241 to 242, Gly-281, 296 to 300, and Arg-322 each bind FMN; these read RSS, NG, and KPTPS.

It belongs to the chorismate synthase family. In terms of assembly, homotetramer. FMNH2 serves as cofactor.

The catalysed reaction is 5-O-(1-carboxyvinyl)-3-phosphoshikimate = chorismate + phosphate. It functions in the pathway metabolic intermediate biosynthesis; chorismate biosynthesis; chorismate from D-erythrose 4-phosphate and phosphoenolpyruvate: step 7/7. Functionally, catalyzes the anti-1,4-elimination of the C-3 phosphate and the C-6 proR hydrogen from 5-enolpyruvylshikimate-3-phosphate (EPSP) to yield chorismate, which is the branch point compound that serves as the starting substrate for the three terminal pathways of aromatic amino acid biosynthesis. This reaction introduces a second double bond into the aromatic ring system. The polypeptide is Chorismate synthase (Helicobacter pylori (strain Shi470)).